The sequence spans 772 residues: Mitochondrial intermediate peptidase (772 aa).

The transit peptide at 1–37 directs the protein to the mitochondrion; that stretch reads MLRTIILKAGSNASIPSPSRQNKLLRFFATAGAVSRT. Zn(2+) is bound at residue H558. The active site involves E559. Zn(2+) contacts are provided by H562 and E587.

The protein belongs to the peptidase M3 family. Zn(2+) is required as a cofactor.

The protein resides in the mitochondrion matrix. It catalyses the reaction Release of an N-terminal octapeptide as second stage of processing of some proteins imported into the mitochondrion.. With respect to regulation, stimulated by Fe(2+). Its function is as follows. Cleaves proteins, imported into the mitochondrion, to their mature size. While most mitochondrial precursor proteins are processed to the mature form in one step by mitochondrial processing peptidase (MPP), the sequential cleavage by MIP of an octapeptide after initial processing by MPP is a required step for a subgroup of nuclear-encoded precursor proteins destined for the matrix or the inner membrane. Cleaves precursor proteins of respiratory components, including subunits of the electron transport chain and tricarboxylic acid cycle enzymes, and components of the mitochondrial genetic machinery, including ribosomal proteins, translation factors, and proteins required for mitochondrial DNA metabolism. The chain is Mitochondrial intermediate peptidase (OCT1) from Saccharomyces cerevisiae (strain ATCC 204508 / S288c) (Baker's yeast).